The primary structure comprises 541 residues: 3-oxoacyl-[acyl-carrier-protein] synthase II, chloroplastic (541 aa).

A chloroplast-targeting transit peptide spans 1 to 103 (MVGASSSYAS…NRNQRRLNRA (103 aa)). The region spanning 129 to 539 (QRRVVVTGMG…GHNSSIIFAP (411 aa)) is the Ketosynthase family 3 (KS3) domain. Active-site for beta-ketoacyl synthase activity residues include cysteine 292, histidine 432, and histidine 468.

The protein belongs to the thiolase-like superfamily. Beta-ketoacyl-ACP synthases family. Homodimer. Mostly expressed in siliques, and, to a lower extent, in leaves, stems, flower buds, and flowers.

Its subcellular location is the plastid. The protein resides in the chloroplast stroma. The catalysed reaction is a fatty acyl-[ACP] + malonyl-[ACP] + H(+) = a 3-oxoacyl-[ACP] + holo-[ACP] + CO2. Essential protein that catalyzes the condensation reaction of fatty acid synthesis by the addition to an acyl acceptor of two carbons from malonyl-ACP. Specific for elongation from C-16 and C-16 to unsaturated C-18 fatty acids. Confers resistance to low temperatures by maintaining chloroplast membranes integrity. Involved in the regulation of fatty acids ratios during seed metabolism. Required for embryo development, especially at the transition from the globular to the heart stage. The protein is 3-oxoacyl-[acyl-carrier-protein] synthase II, chloroplastic (KAS2) of Arabidopsis thaliana (Mouse-ear cress).